A 203-amino-acid chain; its full sequence is NADH-quinone oxidoreductase subunit C (203 aa).

It belongs to the complex I 30 kDa subunit family. As to quaternary structure, NDH-1 is composed of 14 different subunits. Subunits NuoB, C, D, E, F, and G constitute the peripheral sector of the complex.

It localises to the cell inner membrane. The catalysed reaction is a quinone + NADH + 5 H(+)(in) = a quinol + NAD(+) + 4 H(+)(out). Its function is as follows. NDH-1 shuttles electrons from NADH, via FMN and iron-sulfur (Fe-S) centers, to quinones in the respiratory chain. The immediate electron acceptor for the enzyme in this species is believed to be ubiquinone. Couples the redox reaction to proton translocation (for every two electrons transferred, four hydrogen ions are translocated across the cytoplasmic membrane), and thus conserves the redox energy in a proton gradient. The polypeptide is NADH-quinone oxidoreductase subunit C (Methylibium petroleiphilum (strain ATCC BAA-1232 / LMG 22953 / PM1)).